The primary structure comprises 350 residues: tRNA uridine(34) hydroxylase (350 aa).

The region spanning 146-240 (DDPDALFIDM…YARKAREQGL (95 aa)) is the Rhodanese domain. C200 (cysteine persulfide intermediate) is an active-site residue.

This sequence belongs to the TrhO family.

It carries out the reaction uridine(34) in tRNA + AH2 + O2 = 5-hydroxyuridine(34) in tRNA + A + H2O. Catalyzes oxygen-dependent 5-hydroxyuridine (ho5U) modification at position 34 in tRNAs. The protein is tRNA uridine(34) hydroxylase of Shigella dysenteriae serotype 1 (strain Sd197).